A 255-amino-acid chain; its full sequence is Thiazole synthase (255 aa).

Lys96 functions as the Schiff-base intermediate with DXP in the catalytic mechanism. 1-deoxy-D-xylulose 5-phosphate-binding positions include Gly157, 183-184 (AG), and 205-206 (NT).

Belongs to the ThiG family. Homotetramer. Forms heterodimers with either ThiH or ThiS.

The protein resides in the cytoplasm. It carries out the reaction [ThiS sulfur-carrier protein]-C-terminal-Gly-aminoethanethioate + 2-iminoacetate + 1-deoxy-D-xylulose 5-phosphate = [ThiS sulfur-carrier protein]-C-terminal Gly-Gly + 2-[(2R,5Z)-2-carboxy-4-methylthiazol-5(2H)-ylidene]ethyl phosphate + 2 H2O + H(+). It functions in the pathway cofactor biosynthesis; thiamine diphosphate biosynthesis. Catalyzes the rearrangement of 1-deoxy-D-xylulose 5-phosphate (DXP) to produce the thiazole phosphate moiety of thiamine. Sulfur is provided by the thiocarboxylate moiety of the carrier protein ThiS. In vitro, sulfur can be provided by H(2)S. The sequence is that of Thiazole synthase from Staphylococcus epidermidis (strain ATCC 35984 / DSM 28319 / BCRC 17069 / CCUG 31568 / BM 3577 / RP62A).